The chain runs to 263 residues: Urease accessory protein UreH (263 aa).

Belongs to the UreD family. In terms of assembly, ureH, UreF and UreG form a complex that acts as a GTP-hydrolysis-dependent molecular chaperone, activating the urease apoprotein by helping to assemble the nickel containing metallocenter of UreC. The UreE protein probably delivers the nickel.

The protein resides in the cytoplasm. In terms of biological role, required for maturation of urease via the functional incorporation of the urease nickel metallocenter. The chain is Urease accessory protein UreH from Helicobacter acinonychis (strain Sheeba).